We begin with the raw amino-acid sequence, 369 residues long: Choline-phosphate cytidylyltransferase B (369 aa).

Residues 1–27 (MPVLTTDAESETGIPKSLSNEPPSETM) are disordered. 4 residues coordinate CTP: Ile-84, Phe-85, His-92, and Lys-122. Residues Lys-122 and Trp-151 each coordinate phosphocholine. His-168, Asp-169, Tyr-173, Gln-195, Arg-196, Thr-197, and Ile-200 together coordinate CTP. Residues 309-369 (RMLQALSPKQ…SMSEGDEDEK (61 aa)) form a disordered region. Phosphoserine occurs at positions 315, 319, 322, 323, 329, 331, and 335. Residues 319-339 (SPVSSPTRSRSPSRSPSPTFS) show a composition bias toward low complexity. The residue at position 345 (Thr-345) is a Phosphothreonine. Phosphoserine occurs at positions 346, 349, 350, 355, 360, and 362. Residues 351–362 (PKAASASISSMS) are compositionally biased toward low complexity.

The protein belongs to the cytidylyltransferase family. As to quaternary structure, homodimer. Highly expressed in brain (at protein level). Expressed in liver (at protein level). Expressed at lower levels in lung and gonads. As to expression, expressed in brain (at protein level). Expressed at lower levels in lung and gonads.

It localises to the endoplasmic reticulum. Its subcellular location is the cytoplasm. It catalyses the reaction phosphocholine + CTP + H(+) = CDP-choline + diphosphate. The protein operates within phospholipid metabolism; phosphatidylcholine biosynthesis; phosphatidylcholine from phosphocholine: step 1/2. Catalyzes the key rate-limiting step in the CDP-choline pathway for phosphatidylcholine biosynthesis. Plays an important role in ovary maturation and the maintenance of sperm production. Its function is as follows. Catalyzes the key rate-limiting step in the CDP-choline pathway for phosphatidylcholine biosynthesis. The polypeptide is Choline-phosphate cytidylyltransferase B (Pcyt1b) (Mus musculus (Mouse)).